A 274-amino-acid polypeptide reads, in one-letter code: NADPH-dependent 7-cyano-7-deazaguanine reductase (274 aa).

80 to 82 (VES) provides a ligand contact to substrate. Residue 82-83 (SK) coordinates NADPH. The active-site Thioimide intermediate is the Cys-181. Asp-188 acts as the Proton donor in catalysis. 220 to 221 (HE) provides a ligand contact to substrate. Residue 249–250 (RG) participates in NADPH binding.

This sequence belongs to the GTP cyclohydrolase I family. QueF type 2 subfamily. Homodimer.

It localises to the cytoplasm. The catalysed reaction is 7-aminomethyl-7-carbaguanine + 2 NADP(+) = 7-cyano-7-deazaguanine + 2 NADPH + 3 H(+). Its pathway is tRNA modification; tRNA-queuosine biosynthesis. In terms of biological role, catalyzes the NADPH-dependent reduction of 7-cyano-7-deazaguanine (preQ0) to 7-aminomethyl-7-deazaguanine (preQ1). The chain is NADPH-dependent 7-cyano-7-deazaguanine reductase from Paraburkholderia phymatum (strain DSM 17167 / CIP 108236 / LMG 21445 / STM815) (Burkholderia phymatum).